A 150-amino-acid polypeptide reads, in one-letter code: Protein ADM2 (150 aa).

A signal peptide spans 1–25; sequence MAQLLMVTVTLGCISLLYLLPGTLS. A propeptide spanning residues 26–100 is cleaved from the precursor; that stretch reads GSLGKGLRHS…HPGPQRPTGS (75 aa). The segment at 28–102 is disordered; that stretch reads LGKGLRHSRP…GPQRPTGSRR (75 aa). A disulfide bond links C112 and C117. Y149 is modified (tyrosine amide).

The protein belongs to the adrenomedullin family. High expression detected in the submaxillary gland, kidney, stomach, and mesentery, followed by the pituitary, lung, pancreas, intestines, spleen, thymus and ovary. Expressed mainly in the intermediate lobe of the pituitary, with sporadic in the anterior lobe.

The protein resides in the secreted. Functionally, intermedin/ADM2 is a peptide hormone that plays a role as physiological regulator of gastrointestinal and cardiovascular bioactivities mediated by the CALCRL-RAMPs receptor complexes. Activates the cAMP-dependent pathway through interaction with CALCRL-RAMP3 receptor complex. This Mus musculus (Mouse) protein is Protein ADM2.